A 573-amino-acid polypeptide reads, in one-letter code: MTGLSRERYAALYGPTTGDRIRLADTDLVIEITEDRSGGTGLAGDEAVFGGGKVLRESMGQSRATRADGAPDTVITGAVILDHWGIIKADIGIRDGRIVAIGKAGNPDIMDGVHPDLVVGPSTEIIAGNGRILTAGAIDCHVHLICPQIMEEALGGGITTIVAGGTGPAEGSKATTVTPGAWHLARMLEALDTWPLNVVLLGKGNTVSAEAMWEQLRGGAAGFKLHEDWGTTPAAIDACLTVADAAGVQVNIHTDTLNEMAFVEDTLAAIKGRSIHAYHTEGAGGGHAPDIITVASHPNVLPSSTNPTRPHTVNTLDEHLDMLMVCHHLNPSVPEDLAFAESRIRPSTIAAEDLLHDIGAISMIGSDAQAMGRIGEVVLRTWQTAHVMKRRRGALEGDGRADNNRARRYVAKYTICPAVAHGLDGEIGSVEVGKLADLVLWEPAFFGVRPHAVIKGGMIAWAAMGDANASIPTPQPVLPRPMFGAAPAAAAATSVHFVSPQAIEDGLADRIDVRRSLIAVADCRHVGKAQMPLNDAMPRIEVDPDTFTVRIDGDVWQEQPAAELPMAQRYFLF.

The Urease domain occupies 136–573 (GAIDCHVHLI…LPMAQRYFLF (438 aa)). Residues His-141, His-143, and Lys-224 each coordinate Ni(2+). An N6-carboxylysine modification is found at Lys-224. His-226 lines the substrate pocket. Residues His-253 and His-279 each contribute to the Ni(2+) site. Residue His-327 is the Proton donor of the active site. Asp-367 contacts Ni(2+).

The protein belongs to the metallo-dependent hydrolases superfamily. Urease alpha subunit family. In terms of assembly, heterotrimer of UreA (gamma), UreB (beta) and UreC (alpha) subunits. Three heterotrimers associate to form the active enzyme. Requires Ni cation as cofactor. In terms of processing, carboxylation allows a single lysine to coordinate two nickel ions.

The protein resides in the cytoplasm. The catalysed reaction is urea + 2 H2O + H(+) = hydrogencarbonate + 2 NH4(+). Its pathway is nitrogen metabolism; urea degradation; CO(2) and NH(3) from urea (urease route): step 1/1. The polypeptide is Urease subunit alpha (Mycobacterium sp. (strain JLS)).